Reading from the N-terminus, the 1097-residue chain is DNA-directed RNA polymerase subunit beta (1097 aa).

A disordered region spans residues 1072–1097 (QDVNPRRSTPSRPTYESLGVADYDED).

Belongs to the RNA polymerase beta chain family. In cyanobacteria the RNAP catalytic core is composed of 2 alpha, 1 beta, 1 beta', 1 gamma and 1 omega subunit. When a sigma factor is associated with the core the holoenzyme is formed, which can initiate transcription.

It carries out the reaction RNA(n) + a ribonucleoside 5'-triphosphate = RNA(n+1) + diphosphate. In terms of biological role, DNA-dependent RNA polymerase catalyzes the transcription of DNA into RNA using the four ribonucleoside triphosphates as substrates. The polypeptide is DNA-directed RNA polymerase subunit beta (Synechococcus sp. (strain WH7803)).